The sequence spans 224 residues: Myogenin (224 aa).

S77 and S79 each carry phosphoserine; by CaMK2G. A bHLH domain is found at 81–132 (DRRRAATLREKRRLKKVNEAFEALKRSTLLNPNQRLPKVEILRSAIQYIERL). Position 87 is a phosphothreonine; by CaMK2G (T87).

In terms of assembly, homodimer and heterodimer with E12; heterodimerization enhances MYOG DNA-binding and transcriptional activities. Interacts with SMARCA4/BRG1/BAF190A. Interacts (via C-terminal region) with SSRP1 and SUPT16H; the interaction is indicative of an interaction with the FACT complex. Interacts with CSRP3. In terms of processing, phosphorylated by CAMK2G on threonine and serine amino acids in a muscle activity-dependent manner. Phosphorylation of Thr-87 impairs both DNA-binding and trans-activation functions in contracting muscles.

It is found in the nucleus. Its function is as follows. Acts as a transcriptional activator that promotes transcription of muscle-specific target genes and plays a role in muscle differentiation, cell cycle exit and muscle atrophy. Essential for the development of functional embryonic skeletal fiber muscle differentiation. However is dispensable for postnatal skeletal muscle growth; phosphorylation by CAMK2G inhibits its transcriptional activity in respons to muscle activity. Required for the recruitment of the FACT complex to muscle-specific promoter regions, thus promoting gene expression initiation. During terminal myoblast differentiation, plays a role as a strong activator of transcription at loci with an open chromatin structure previously initiated by MYOD1. Together with MYF5 and MYOD1, co-occupies muscle-specific gene promoter core regions during myogenesis. Also cooperates with myocyte-specific enhancer factor MEF2D and BRG1-dependent recruitment of SWI/SNF chromatin-remodeling enzymes to alter chromatin structure at myogenic late gene promoters. Facilitates cell cycle exit during terminal muscle differentiation through the up-regulation of miR-20a expression, which in turn represses genes involved in cell cycle progression. Binds to the E-box containing (E1) promoter region of the miR-20a gene. Also plays a role in preventing reversal of muscle cell differentiation. Contributes to the atrophy-related gene expression in adult denervated muscles. Induces fibroblasts to differentiate into myoblasts. The polypeptide is Myogenin (MYOG) (Homo sapiens (Human)).